Consider the following 65-residue polypeptide: UPF0434 protein Rpal_0270 (65 aa).

This sequence belongs to the UPF0434 family.

The sequence is that of UPF0434 protein Rpal_0270 from Rhodopseudomonas palustris (strain TIE-1).